A 728-amino-acid polypeptide reads, in one-letter code: Catalase-peroxidase 2 (728 aa).

The segment at residues 91 to 214 is a cross-link (tryptophyl-tyrosyl-methioninium (Trp-Tyr) (with M-240)); the sequence is WHAAGTYRTG…LAAVQMGLIY (124 aa). Histidine 92 (proton acceptor) is an active-site residue. The tryptophyl-tyrosyl-methioninium (Tyr-Met) (with W-91) cross-link spans 214-240; it reads YVNPEGPNGNPDPAKAAVDIRETFARM. Histidine 255 contacts heme b. The tract at residues 338-362 is disordered; sequence WKPNGDAGANSIPDPYDPSRRRGPT.

This sequence belongs to the peroxidase family. Peroxidase/catalase subfamily. As to quaternary structure, homodimer or homotetramer. It depends on heme b as a cofactor. Formation of the three residue Trp-Tyr-Met cross-link is important for the catalase, but not the peroxidase activity of the enzyme.

The enzyme catalyses H2O2 + AH2 = A + 2 H2O. It catalyses the reaction 2 H2O2 = O2 + 2 H2O. In terms of biological role, bifunctional enzyme with both catalase and broad-spectrum peroxidase activity. This chain is Catalase-peroxidase 2, found in Cupriavidus pinatubonensis (strain JMP 134 / LMG 1197) (Cupriavidus necator (strain JMP 134)).